The sequence spans 388 residues: MYDFQGALKDIKNKGLYREFRNVNAAQGPYTVIDGRKMLMMSSNNYLGLCDDIRLKRAAIESIRKFGVGAGGSRLTCGNFELHRELEERLAKFKDVESCIVFGSGYAANIGAISGIADKNWVIFCDRLNHASIVDGIRLSGAKLVVYKHCDMEDLESKIVRYHTGKSLIVTDGVFSMDGDVAPVDRIVKLAKKYNLMTMVDDAHATGILGEKGRGTSEYFGLKDAVDISMGTLSKAFGVEGGFVAGKRKLVDFLRHKAKSFIYSTAPPPHNMAAALEALNIIETEPQARKELAEKSVWLRNRLIEKGFNVPKGVTPIIPLMVGDVNTAVEFSMLLYNEGIYIPAIRPPTVPKGTSRLRISIMASHSYEDMEFALKNLVRFGRKLGIIP.

Arg18 provides a ligand contact to substrate. 105 to 106 (GY) contacts pyridoxal 5'-phosphate. His130 serves as a coordination point for substrate. Residues Ser176, 201-204 (DDAH), and 232-235 (TLSK) each bind pyridoxal 5'-phosphate. An N6-(pyridoxal phosphate)lysine modification is found at Lys235. Position 349 (Thr349) interacts with substrate.

Belongs to the class-II pyridoxal-phosphate-dependent aminotransferase family. BioF subfamily. In terms of assembly, homodimer. Pyridoxal 5'-phosphate serves as cofactor.

It carries out the reaction 6-carboxyhexanoyl-[ACP] + L-alanine + H(+) = (8S)-8-amino-7-oxononanoate + holo-[ACP] + CO2. Its pathway is cofactor biosynthesis; biotin biosynthesis. In terms of biological role, catalyzes the decarboxylative condensation of pimeloyl-[acyl-carrier protein] and L-alanine to produce 8-amino-7-oxononanoate (AON), [acyl-carrier protein], and carbon dioxide. This is Putative 8-amino-7-oxononanoate synthase (bioF) from Acetivibrio thermocellus (strain ATCC 27405 / DSM 1237 / JCM 9322 / NBRC 103400 / NCIMB 10682 / NRRL B-4536 / VPI 7372) (Clostridium thermocellum).